The following is a 96-amino-acid chain: Citrate lyase acyl carrier protein (96 aa).

Residue S14 is modified to O-(phosphoribosyl dephospho-coenzyme A)serine.

This sequence belongs to the CitD family. As to quaternary structure, oligomer with a subunit composition of (alpha,beta,gamma)6.

It localises to the cytoplasm. Covalent carrier of the coenzyme of citrate lyase. The protein is Citrate lyase acyl carrier protein of Pectobacterium atrosepticum (strain SCRI 1043 / ATCC BAA-672) (Erwinia carotovora subsp. atroseptica).